A 395-amino-acid polypeptide reads, in one-letter code: E3 ubiquitin-protein ligase NHLRC1 (395 aa).

An RING-type zinc finger spans residues C26 to R72. NHL repeat units lie at residues A113–G157, A161–F204, G205–D245, E248–S300, M301–P349, and E350–D393.

In terms of assembly, interacts with AGL. Interacts (via the NHL repeats) with EPM2A/laforin. Forms a complex with EPM2A/laforin and HSP70. Interacts with PRDM8. In terms of tissue distribution, expressed in brain, cerebellum, spinal cord, medulla, heart, liver, skeletal muscle and pancreas.

The protein resides in the endoplasmic reticulum. It is found in the nucleus. It carries out the reaction S-ubiquitinyl-[E2 ubiquitin-conjugating enzyme]-L-cysteine + [acceptor protein]-L-lysine = [E2 ubiquitin-conjugating enzyme]-L-cysteine + N(6)-ubiquitinyl-[acceptor protein]-L-lysine.. Its pathway is protein modification; protein ubiquitination. Functionally, E3 ubiquitin-protein ligase. Together with the phosphatase EPM2A/laforin, appears to be involved in the clearance of toxic polyglucosan and protein aggregates via multiple pathways. In complex with EPM2A/laforin and HSP70, suppresses the cellular toxicity of misfolded proteins by promoting their degradation through the ubiquitin-proteasome system (UPS). Ubiquitinates the glycogen-targeting protein phosphatase subunits PPP1R3C/PTG and PPP1R3D in a laforin-dependent manner and targets them for proteasome-dependent degradation, thus decreasing glycogen accumulation. Polyubiquitinates EPM2A/laforin and ubiquitinates AGL and targets them for proteasome-dependent degradation. Also promotes proteasome-independent protein degradation through the macroautophagy pathway. The polypeptide is E3 ubiquitin-protein ligase NHLRC1 (NHLRC1) (Homo sapiens (Human)).